A 432-amino-acid chain; its full sequence is Alcohol acyltransferase 9 (432 aa).

Residues histidine 156 and aspartate 379 each act as proton acceptor in the active site.

It belongs to the plant acyltransferase family.

It catalyses the reaction 2-(methylsulfanyl)acetyl-CoA + butan-1-ol = butyl 2-(methylsulfanyl)acetate + CoA. The catalysed reaction is ethanol + acetyl-CoA = ethyl acetate + CoA. The enzyme catalyses butan-1-ol + acetyl-CoA = butyl acetate + CoA. It carries out the reaction butan-1-ol + propanoyl-CoA = butyl propanoate + CoA. Involved in the biosynthesis of volatile esters which confer kiwifruit flavor. Alcohol acyl transferase that can use a wide range of alcohols as substrate to produce esters. Exhibits acetyl-CoA:alcohol O-acyltransferase activity. The protein is Alcohol acyltransferase 9 of Actinidia chinensis var. chinensis (Chinese soft-hair kiwi).